The primary structure comprises 693 residues: Glycine--tRNA ligase beta subunit (693 aa).

Belongs to the class-II aminoacyl-tRNA synthetase family. In terms of assembly, tetramer of two alpha and two beta subunits.

The protein resides in the cytoplasm. It carries out the reaction tRNA(Gly) + glycine + ATP = glycyl-tRNA(Gly) + AMP + diphosphate. This Natranaerobius thermophilus (strain ATCC BAA-1301 / DSM 18059 / JW/NM-WN-LF) protein is Glycine--tRNA ligase beta subunit.